Here is a 151-residue protein sequence, read N- to C-terminus: MSKTYLPPQESLERDWYVVDATDKRLGRLASEIAMILRGKNKAHYTPHLDTGDFVIVVNAEKVAVTGKKRTQKLYRRHSGRPGGMKTETFAKLQQRLPERIVEHAVKGMLPKNSLGKQLFTKLKVYAGPTHPHDAQKPKELNINTIPGAES.

Residues 129-151 form a disordered region; that stretch reads PTHPHDAQKPKELNINTIPGAES. Positions 131–140 are enriched in basic and acidic residues; sequence HPHDAQKPKE.

Belongs to the universal ribosomal protein uL13 family. As to quaternary structure, part of the 50S ribosomal subunit.

In terms of biological role, this protein is one of the early assembly proteins of the 50S ribosomal subunit, although it is not seen to bind rRNA by itself. It is important during the early stages of 50S assembly. The protein is Large ribosomal subunit protein uL13 of Trichormus variabilis (strain ATCC 29413 / PCC 7937) (Anabaena variabilis).